The chain runs to 190 residues: MLVFIGLGNPGPRYVLTRHNVGFLFVDELLKKFQIGSSYRAETYEAFKLKSQSPAIAVKPLTYMNNSGIAVRDLIRDFGLSQNDRLIVIYDDVWIPLGRLRIRERGSDGGHNGVKSIISSLGTQEFSRIRIGIGPKPDDIDMVSYVLGEFTDSELKVLWKVLDLAISAAQEMFAADFKKVMSRYNSIGVE.

Residue Tyr-14 participates in tRNA binding. The active-site Proton acceptor is His-19. Positions 63, 65, and 112 each coordinate tRNA.

The protein belongs to the PTH family. In terms of assembly, monomer.

It is found in the cytoplasm. It catalyses the reaction an N-acyl-L-alpha-aminoacyl-tRNA + H2O = an N-acyl-L-amino acid + a tRNA + H(+). In terms of biological role, hydrolyzes ribosome-free peptidyl-tRNAs (with 1 or more amino acids incorporated), which drop off the ribosome during protein synthesis, or as a result of ribosome stalling. Catalyzes the release of premature peptidyl moieties from peptidyl-tRNA molecules trapped in stalled 50S ribosomal subunits, and thus maintains levels of free tRNAs and 50S ribosomes. In Kosmotoga olearia (strain ATCC BAA-1733 / DSM 21960 / TBF 19.5.1), this protein is Peptidyl-tRNA hydrolase.